Consider the following 284-residue polypeptide: Pantothenate synthetase (284 aa).

ATP is bound at residue 30 to 37 (MGNLHDGH). Residue His-37 is the Proton donor of the active site. Gln-61 is a binding site for (R)-pantoate. Gln-61 is a beta-alanine binding site. 149–152 (GEKD) serves as a coordination point for ATP. Gln-155 is a binding site for (R)-pantoate. ATP is bound by residues Val-178 and 186-189 (LSSR).

Belongs to the pantothenate synthetase family. Homodimer.

The protein resides in the cytoplasm. It carries out the reaction (R)-pantoate + beta-alanine + ATP = (R)-pantothenate + AMP + diphosphate + H(+). Its pathway is cofactor biosynthesis; (R)-pantothenate biosynthesis; (R)-pantothenate from (R)-pantoate and beta-alanine: step 1/1. In terms of biological role, catalyzes the condensation of pantoate with beta-alanine in an ATP-dependent reaction via a pantoyl-adenylate intermediate. This Photorhabdus laumondii subsp. laumondii (strain DSM 15139 / CIP 105565 / TT01) (Photorhabdus luminescens subsp. laumondii) protein is Pantothenate synthetase.